The sequence spans 428 residues: 3-phosphoshikimate 1-carboxyvinyltransferase (428 aa).

Lys-23, Ser-24, and Arg-28 together coordinate 3-phosphoshikimate. Position 23 (Lys-23) interacts with phosphoenolpyruvate. The phosphoenolpyruvate site is built by Gly-97 and Arg-125. 7 residues coordinate 3-phosphoshikimate: Ser-170, Ser-171, Gln-172, Ser-198, Asp-314, Asn-337, and Lys-341. Gln-172 contacts phosphoenolpyruvate. Residue Asp-314 is the Proton acceptor of the active site. Phosphoenolpyruvate is bound by residues Arg-345, Arg-387, and Lys-412.

This sequence belongs to the EPSP synthase family. Monomer.

The protein localises to the cytoplasm. It carries out the reaction 3-phosphoshikimate + phosphoenolpyruvate = 5-O-(1-carboxyvinyl)-3-phosphoshikimate + phosphate. It participates in metabolic intermediate biosynthesis; chorismate biosynthesis; chorismate from D-erythrose 4-phosphate and phosphoenolpyruvate: step 6/7. In terms of biological role, catalyzes the transfer of the enolpyruvyl moiety of phosphoenolpyruvate (PEP) to the 5-hydroxyl of shikimate-3-phosphate (S3P) to produce enolpyruvyl shikimate-3-phosphate and inorganic phosphate. The sequence is that of 3-phosphoshikimate 1-carboxyvinyltransferase from Buchnera aphidicola subsp. Schizaphis graminum (strain Sg).